A 553-amino-acid polypeptide reads, in one-letter code: Hydroxylamine reductase (553 aa).

Positions 3, 6, 18, and 25 each coordinate [2Fe-2S] cluster. 8 residues coordinate hybrid [4Fe-2O-2S] cluster: histidine 249, glutamate 273, cysteine 317, cysteine 405, cysteine 433, cysteine 459, glutamate 493, and lysine 495. Cysteine 405 is subject to Cysteine persulfide.

Belongs to the HCP family. [2Fe-2S] cluster serves as cofactor. It depends on hybrid [4Fe-2O-2S] cluster as a cofactor.

The protein resides in the cytoplasm. The enzyme catalyses A + NH4(+) + H2O = hydroxylamine + AH2 + H(+). Functionally, catalyzes the reduction of hydroxylamine to form NH(3) and H(2)O. In Actinobacillus succinogenes (strain ATCC 55618 / DSM 22257 / CCUG 43843 / 130Z), this protein is Hydroxylamine reductase.